A 288-amino-acid polypeptide reads, in one-letter code: G1/S-specific cyclin-D2 (288 aa).

One can recognise a Cyclin N-terminal domain in the interval 26-151; it reads VLQNLLTIEE…VVLGKLKWNL (126 aa). A disordered region spans residues 264 to 288; it reads DQDGSKSEDELDQASTPTDVRDIDL. The residue at position 270 (Ser-270) is a Phosphoserine. Thr-279 bears the Phosphothreonine mark.

Belongs to the cyclin family. Cyclin D subfamily. Interacts with either CDK4 or CDK6 protein kinase to form a serine/threonine kinase holoenzyme complex. The cyclin subunit imparts substrate specificity to the complex. Phosphorylation at Thr-279 by MAP kinases is required for ubiquitination and degradation by the DCX(AMBRA1) complex. Post-translationally, ubiquitinated by the DCX(AMBRA1) complex during the transition from G1 to S cell phase, leading to its degradation: ubiquitination is dependent on Thr-279 phosphorylation. The DCX(AMBRA1) complex represents the major regulator of CCND2 stability during the G1/S transition. Polyubiquitinated by the SCF(FBXL2) complex, leading to proteasomal degradation.

Its subcellular location is the nucleus. The protein resides in the cytoplasm. It localises to the nucleus membrane. Functionally, regulatory component of the cyclin D2-CDK4 (DC) complex that phosphorylates and inhibits members of the retinoblastoma (RB) protein family including RB1 and regulates the cell-cycle during G(1)/S transition. Phosphorylation of RB1 allows dissociation of the transcription factor E2F from the RB/E2F complex and the subsequent transcription of E2F target genes which are responsible for the progression through the G(1) phase. Hypophosphorylates RB1 in early G(1) phase. Cyclin D-CDK4 complexes are major integrators of various mitogenenic and antimitogenic signals. This Sus scrofa (Pig) protein is G1/S-specific cyclin-D2 (CCND2).